A 101-amino-acid chain; its full sequence is Aspartyl/glutamyl-tRNA(Asn/Gln) amidotransferase subunit C (101 aa).

Belongs to the GatC family. As to quaternary structure, heterotrimer of A, B and C subunits.

The catalysed reaction is L-glutamyl-tRNA(Gln) + L-glutamine + ATP + H2O = L-glutaminyl-tRNA(Gln) + L-glutamate + ADP + phosphate + H(+). It carries out the reaction L-aspartyl-tRNA(Asn) + L-glutamine + ATP + H2O = L-asparaginyl-tRNA(Asn) + L-glutamate + ADP + phosphate + 2 H(+). Its function is as follows. Allows the formation of correctly charged Asn-tRNA(Asn) or Gln-tRNA(Gln) through the transamidation of misacylated Asp-tRNA(Asn) or Glu-tRNA(Gln) in organisms which lack either or both of asparaginyl-tRNA or glutaminyl-tRNA synthetases. The reaction takes place in the presence of glutamine and ATP through an activated phospho-Asp-tRNA(Asn) or phospho-Glu-tRNA(Gln). This chain is Aspartyl/glutamyl-tRNA(Asn/Gln) amidotransferase subunit C, found in Lactococcus lactis subsp. cremoris (strain SK11).